Here is a 437-residue protein sequence, read N- to C-terminus: Adenylosuccinate synthetase 1 (437 aa).

GTP contacts are provided by residues 13–19 and 41–43; these read GDEGKGK and GHT. Catalysis depends on D14, which acts as the Proton acceptor. The Mg(2+) site is built by D14 and G41. Residues 14 to 17, 39 to 42, T130, R144, Q225, T240, and R310 each bind IMP; these read DEGK and NAGH. The Proton donor role is filled by H42. 306–312 contacts substrate; the sequence is ATTGRLR. GTP is bound by residues R312, 338 to 340, and 421 to 423; these read KLD and STG.

This sequence belongs to the adenylosuccinate synthetase family. Homodimer. The cofactor is Mg(2+).

It is found in the cytoplasm. The catalysed reaction is IMP + L-aspartate + GTP = N(6)-(1,2-dicarboxyethyl)-AMP + GDP + phosphate + 2 H(+). Its pathway is purine metabolism; AMP biosynthesis via de novo pathway; AMP from IMP: step 1/2. Functionally, plays an important role in the de novo pathway of purine nucleotide biosynthesis. Catalyzes the first committed step in the biosynthesis of AMP from IMP. The protein is Adenylosuccinate synthetase 1 of Pseudoalteromonas translucida (strain TAC 125).